A 91-amino-acid chain; its full sequence is Hepcidin-1 (91 aa).

The first 24 residues, 1-24 (MKLSNVFLAAVVILTCVCVFQITA), serve as a signal peptide directing secretion. Residues 25–64 (VPFIQQVQDEHHVESEELQENQHLTEAEHRQTDPLVLFRT) constitute a propeptide that is removed on maturation. Intrachain disulfides connect cysteine 73–cysteine 89, cysteine 76–cysteine 79, cysteine 77–cysteine 85, and cysteine 80–cysteine 88.

The protein belongs to the hepcidin family.

It is found in the secreted. Functionally, seems to act as a signaling molecule involved in the maintenance of iron homeostasis. Seems to be required in conjunction with HFE to regulate both intestinal iron absorption and iron storage in macrophages. May also have antimicrobial activity. The polypeptide is Hepcidin-1 (hamp1) (Danio rerio (Zebrafish)).